A 239-amino-acid polypeptide reads, in one-letter code: Peptidyl-tRNA hydrolase (239 aa).

Residue tyrosine 14 participates in tRNA binding. Histidine 19 acts as the Proton acceptor in catalysis. TRNA-binding residues include phenylalanine 64, asparagine 66, and asparagine 112. Residues 199–227 (EKPAQKGRSHIRQARPKAPPAELPSSGPM) are disordered. The segment covering 203–213 (QKGRSHIRQAR) has biased composition (basic residues).

It belongs to the PTH family. As to quaternary structure, monomer.

It is found in the cytoplasm. The enzyme catalyses an N-acyl-L-alpha-aminoacyl-tRNA + H2O = an N-acyl-L-amino acid + a tRNA + H(+). Functionally, hydrolyzes ribosome-free peptidyl-tRNAs (with 1 or more amino acids incorporated), which drop off the ribosome during protein synthesis, or as a result of ribosome stalling. Its function is as follows. Catalyzes the release of premature peptidyl moieties from peptidyl-tRNA molecules trapped in stalled 50S ribosomal subunits, and thus maintains levels of free tRNAs and 50S ribosomes. The chain is Peptidyl-tRNA hydrolase from Chelativorans sp. (strain BNC1).